Here is a 94-residue protein sequence, read N- to C-terminus: Small ribosomal subunit protein uS19 (94 aa).

Belongs to the universal ribosomal protein uS19 family.

Protein S19 forms a complex with S13 that binds strongly to the 16S ribosomal RNA. This chain is Small ribosomal subunit protein uS19, found in Acetivibrio thermocellus (strain ATCC 27405 / DSM 1237 / JCM 9322 / NBRC 103400 / NCIMB 10682 / NRRL B-4536 / VPI 7372) (Clostridium thermocellum).